A 398-amino-acid chain; its full sequence is uncharacterized protein (398 aa).

The protein belongs to the glycosyltransferase 2 family.

This is an uncharacterized protein from Escherichia coli (strain K12).